A 177-amino-acid chain; its full sequence is Large ribosomal subunit protein uL5 (177 aa).

The protein belongs to the universal ribosomal protein uL5 family. In terms of assembly, part of the 50S ribosomal subunit; part of the 5S rRNA/L5/L18/L25 subcomplex. Contacts the 5S rRNA and the P site tRNA. Forms a bridge to the 30S subunit in the 70S ribosome.

Functionally, this is one of the proteins that bind and probably mediate the attachment of the 5S RNA into the large ribosomal subunit, where it forms part of the central protuberance. In the 70S ribosome it contacts protein S13 of the 30S subunit (bridge B1b), connecting the 2 subunits; this bridge is implicated in subunit movement. Contacts the P site tRNA; the 5S rRNA and some of its associated proteins might help stabilize positioning of ribosome-bound tRNAs. This chain is Large ribosomal subunit protein uL5, found in Wolbachia sp. subsp. Brugia malayi (strain TRS).